A 332-amino-acid chain; its full sequence is UPF0194 membrane protein YbhG (332 aa).

Positions 1–16 (MMKKTVVIGLAVVVLA) are cleaved as a signal peptide. A coiled-coil region spans residues 108–209 (EEIAQAAAAV…LNLQDSTLIA (102 aa)).

This sequence belongs to the UPF0194 family.

The protein localises to the periplasm. In Shigella dysenteriae serotype 1 (strain Sd197), this protein is UPF0194 membrane protein YbhG.